A 344-amino-acid polypeptide reads, in one-letter code: N-acetyl-gamma-glutamyl-phosphate reductase (344 aa).

Residue cysteine 150 is part of the active site.

Belongs to the NAGSA dehydrogenase family. Type 1 subfamily.

It is found in the cytoplasm. It catalyses the reaction N-acetyl-L-glutamate 5-semialdehyde + phosphate + NADP(+) = N-acetyl-L-glutamyl 5-phosphate + NADPH + H(+). It functions in the pathway amino-acid biosynthesis; L-arginine biosynthesis; N(2)-acetyl-L-ornithine from L-glutamate: step 3/4. Its function is as follows. Catalyzes the NADPH-dependent reduction of N-acetyl-5-glutamyl phosphate to yield N-acetyl-L-glutamate 5-semialdehyde. In Pseudomonas putida (strain W619), this protein is N-acetyl-gamma-glutamyl-phosphate reductase.